Here is a 544-residue protein sequence, read N- to C-terminus: CTP synthase (544 aa).

The interval 1-267 (MAKFVFITGG…CREVLDVLDL (267 aa)) is amidoligase domain. Serine 13 provides a ligand contact to CTP. UTP is bound at residue serine 13. Residues 14-19 (SIGKGI) and aspartate 71 contribute to the ATP site. Mg(2+) contacts are provided by aspartate 71 and glutamate 141. CTP is bound by residues 148-150 (DIE), 188-193 (KTKPTQ), and lysine 224. UTP-binding positions include 188–193 (KTKPTQ) and lysine 224. The region spanning 292–534 (KVALVGKYIQ…IEAAQQRLPS (243 aa)) is the Glutamine amidotransferase type-1 domain. Residue glycine 354 participates in L-glutamine binding. Cysteine 381 (nucleophile; for glutamine hydrolysis) is an active-site residue. Residues 382 to 385 (LGMQ), glutamate 405, and arginine 462 contribute to the L-glutamine site. Active-site residues include histidine 507 and glutamate 509.

Belongs to the CTP synthase family. In terms of assembly, homotetramer.

It carries out the reaction UTP + L-glutamine + ATP + H2O = CTP + L-glutamate + ADP + phosphate + 2 H(+). The enzyme catalyses L-glutamine + H2O = L-glutamate + NH4(+). The catalysed reaction is UTP + NH4(+) + ATP = CTP + ADP + phosphate + 2 H(+). It functions in the pathway pyrimidine metabolism; CTP biosynthesis via de novo pathway; CTP from UDP: step 2/2. Its activity is regulated as follows. Allosterically activated by GTP, when glutamine is the substrate; GTP has no effect on the reaction when ammonia is the substrate. The allosteric effector GTP functions by stabilizing the protein conformation that binds the tetrahedral intermediate(s) formed during glutamine hydrolysis. Inhibited by the product CTP, via allosteric rather than competitive inhibition. Functionally, catalyzes the ATP-dependent amination of UTP to CTP with either L-glutamine or ammonia as the source of nitrogen. Regulates intracellular CTP levels through interactions with the four ribonucleotide triphosphates. The sequence is that of CTP synthase from Parasynechococcus marenigrum (strain WH8102).